The primary structure comprises 397 residues: Probable sugar efflux transporter (397 aa).

12 consecutive transmembrane segments (helical) span residues 15 to 35, 51 to 71, 81 to 101, 103 to 123, 136 to 156, 170 to 190, 209 to 229, 246 to 266, 273 to 293, 301 to 321, 333 to 353, and 364 to 384; these read VVTL…PVGL, GIML…FMLL, LICL…AWSF, VLVI…SITA, AQAL…GLPV, FLAI…LLPL, PALM…YTAY, FATV…VIFG, ASVL…LLMP, LAIL…GMQV, VAMS…ALVG, and DIGY…VIIF.

The protein belongs to the major facilitator superfamily. SotB (TC 2.A.1.2) family.

It localises to the cell inner membrane. In terms of biological role, involved in the efflux of sugars. The physiological role may be the reduction of the intracellular concentration of toxic sugars or sugar metabolites. In Escherichia fergusonii (strain ATCC 35469 / DSM 13698 / CCUG 18766 / IAM 14443 / JCM 21226 / LMG 7866 / NBRC 102419 / NCTC 12128 / CDC 0568-73), this protein is Probable sugar efflux transporter.